Reading from the N-terminus, the 279-residue chain is Large ribosomal subunit protein uL2 (279 aa).

Positions 224–279 (AMNAVDHPMGGGRGHSKGGNIPRSPWNQPSRGLKTRPKKSWDWMIVSDRRKNKAGK) are disordered.

This sequence belongs to the universal ribosomal protein uL2 family. Part of the 50S ribosomal subunit. Forms a bridge to the 30S subunit in the 70S ribosome.

Its function is as follows. One of the primary rRNA binding proteins. Required for association of the 30S and 50S subunits to form the 70S ribosome, for tRNA binding and peptide bond formation. It has been suggested to have peptidyltransferase activity; this is somewhat controversial. Makes several contacts with the 16S rRNA in the 70S ribosome. This Elusimicrobium minutum (strain Pei191) protein is Large ribosomal subunit protein uL2.